The primary structure comprises 206 residues: Inosine triphosphate pyrophosphatase (206 aa).

21-26 contacts ITP; it reads TGNAKK. E49 provides a ligand contact to Mg(2+). ITP is bound by residues K61, 77–78, K94, 153–156, K176, and 181–182; these read DT, FGWD, and HR.

Belongs to the HAM1 NTPase family. As to quaternary structure, homodimer. Requires Mg(2+) as cofactor. Mn(2+) serves as cofactor.

Its subcellular location is the cytoplasm. It carries out the reaction ITP + H2O = IMP + diphosphate + H(+). It catalyses the reaction dITP + H2O = dIMP + diphosphate + H(+). The catalysed reaction is XTP + H2O = XMP + diphosphate + H(+). Functionally, pyrophosphatase that hydrolyzes non-canonical purine nucleotides such as inosine triphosphate (ITP), deoxyinosine triphosphate (dITP) or xanthosine 5'-triphosphate (XTP) to their respective monophosphate derivatives. The enzyme does not distinguish between the deoxy- and ribose forms. Probably excludes non-canonical purines from RNA and DNA precursor pools, thus preventing their incorporation into RNA and DNA and avoiding chromosomal lesions. This is Inosine triphosphate pyrophosphatase from Vitis vinifera (Grape).